We begin with the raw amino-acid sequence, 319 residues long: Cobalamin biosynthesis protein CobD (319 aa).

Transmembrane regions (helical) follow at residues 56–76 (VMWL…LALA), 78–98 (GIHP…ALAG), 153–173 (VDGI…LAMA), 204–224 (VANF…AVLC), and 296–316 (LMWV…YWLV).

Belongs to the CobD/CbiB family.

The protein localises to the cell membrane. It functions in the pathway cofactor biosynthesis; adenosylcobalamin biosynthesis. Converts cobyric acid to cobinamide by the addition of aminopropanol on the F carboxylic group. In Klebsiella pneumoniae subsp. pneumoniae (strain ATCC 700721 / MGH 78578), this protein is Cobalamin biosynthesis protein CobD.